The following is a 152-amino-acid chain: SsrA-binding protein (152 aa).

It belongs to the SmpB family.

It is found in the cytoplasm. Its function is as follows. Required for rescue of stalled ribosomes mediated by trans-translation. Binds to transfer-messenger RNA (tmRNA), required for stable association of tmRNA with ribosomes. tmRNA and SmpB together mimic tRNA shape, replacing the anticodon stem-loop with SmpB. tmRNA is encoded by the ssrA gene; the 2 termini fold to resemble tRNA(Ala) and it encodes a 'tag peptide', a short internal open reading frame. During trans-translation Ala-aminoacylated tmRNA acts like a tRNA, entering the A-site of stalled ribosomes, displacing the stalled mRNA. The ribosome then switches to translate the ORF on the tmRNA; the nascent peptide is terminated with the 'tag peptide' encoded by the tmRNA and targeted for degradation. The ribosome is freed to recommence translation, which seems to be the essential function of trans-translation. This is SsrA-binding protein from Rickettsia rickettsii.